Consider the following 262-residue polypeptide: Ribose-5-phosphate isomerase A (262 aa).

Substrate is bound by residues 33-36, 89-92, and 102-105; these read TGST, DGAD, and KGGG. The Proton acceptor role is filled by Glu111. Position 129 (Lys129) interacts with substrate.

It belongs to the ribose 5-phosphate isomerase family. As to quaternary structure, homodimer.

The enzyme catalyses aldehydo-D-ribose 5-phosphate = D-ribulose 5-phosphate. Its pathway is carbohydrate degradation; pentose phosphate pathway; D-ribose 5-phosphate from D-ribulose 5-phosphate (non-oxidative stage): step 1/1. In terms of biological role, catalyzes the reversible conversion of ribose-5-phosphate to ribulose 5-phosphate. This is Ribose-5-phosphate isomerase A from Roseobacter denitrificans (strain ATCC 33942 / OCh 114) (Erythrobacter sp. (strain OCh 114)).